Consider the following 457-residue polypeptide: Zinc finger protein ZPR1 (457 aa).

The span at 1–13 (MSTVSDPNSSNPP) shows a compositional bias: polar residues. The tract at residues 1 to 21 (MSTVSDPNSSNPPESAGNIRP) is disordered. C4-type zinc fingers lie at residues 43 to 75 (CMNCFETGVTRLLPTKIPFFREVVLMSFKCDHC) and 261 to 293 (CPSCQAPCETNMKLTNIPHFKEVVIMATVCGAC). Residues 414–457 (VQSLSDDDSEPDDKLTVERYDRSYEDNEDLGLNDMKTEGYEEKA) are disordered. 2 stretches are compositionally biased toward basic and acidic residues: residues 425–438 (DDKLTVERYDRSYE) and 448–457 (MKTEGYEEKA).

The protein belongs to the ZPR1 family.

Functionally, might mediate EGFR and FGFR signal transduction cascades required for lumen formation in tracheal cells. This is Zinc finger protein ZPR1 from Drosophila melanogaster (Fruit fly).